The sequence spans 165 residues: NADPH-dependent 7-cyano-7-deazaguanine reductase (165 aa).

Catalysis depends on Cys56, which acts as the Thioimide intermediate. Residue Asp63 is the Proton donor of the active site. Substrate contacts are provided by residues 78–80 and 97–98; these read VES and HE.

The protein belongs to the GTP cyclohydrolase I family. QueF type 1 subfamily.

It is found in the cytoplasm. The catalysed reaction is 7-aminomethyl-7-carbaguanine + 2 NADP(+) = 7-cyano-7-deazaguanine + 2 NADPH + 3 H(+). Its pathway is tRNA modification; tRNA-queuosine biosynthesis. Is totally inhibited by 4-aminobenzylcyanide in vitro. Functionally, catalyzes the NADPH-dependent reduction of 7-cyano-7-deazaguanine (preQ0) to 7-aminomethyl-7-deazaguanine (preQ1), a late step in the queuosine pathway. Is highly specific for its natural substrate preQ0, since it cannot use various aliphatic, aromatic and heterocyclic nitriles, although it can reduce the substrate analog 5-cyanopyrrolo[2,3-d]pyrimidin-4-one with lesser efficiency. This Geobacillus kaustophilus (strain HTA426) protein is NADPH-dependent 7-cyano-7-deazaguanine reductase.